The sequence spans 547 residues: CTP synthase (547 aa).

An amidoligase domain region spans residues 1-273 (MNNKKLKSKF…DHFILNHFQL (273 aa)). Serine 19 serves as a coordination point for CTP. Serine 19 contacts UTP. 20–25 (SLGKGI) lines the ATP pocket. Residue tyrosine 60 participates in L-glutamine binding. Position 77 (aspartate 77) interacts with ATP. Mg(2+) is bound by residues aspartate 77 and glutamate 147. Residues 154–156 (DIE), 194–199 (KTKPTQ), and lysine 230 each bind CTP. UTP contacts are provided by residues 194–199 (KTKPTQ) and lysine 230. The Glutamine amidotransferase type-1 domain occupies 306-539 (YVILHDAYLS…VEAALLKNGK (234 aa)). Residue glycine 361 participates in L-glutamine binding. The active-site Nucleophile; for glutamine hydrolysis is the cysteine 388. L-glutamine contacts are provided by residues 389–392 (FGMQ), glutamate 412, and arginine 466. Residues histidine 512 and glutamate 514 contribute to the active site.

The protein belongs to the CTP synthase family. Homotetramer.

It catalyses the reaction UTP + L-glutamine + ATP + H2O = CTP + L-glutamate + ADP + phosphate + 2 H(+). It carries out the reaction L-glutamine + H2O = L-glutamate + NH4(+). The catalysed reaction is UTP + NH4(+) + ATP = CTP + ADP + phosphate + 2 H(+). The protein operates within pyrimidine metabolism; CTP biosynthesis via de novo pathway; CTP from UDP: step 2/2. Its activity is regulated as follows. Allosterically activated by GTP, when glutamine is the substrate; GTP has no effect on the reaction when ammonia is the substrate. The allosteric effector GTP functions by stabilizing the protein conformation that binds the tetrahedral intermediate(s) formed during glutamine hydrolysis. Inhibited by the product CTP, via allosteric rather than competitive inhibition. In terms of biological role, catalyzes the ATP-dependent amination of UTP to CTP with either L-glutamine or ammonia as the source of nitrogen. Regulates intracellular CTP levels through interactions with the four ribonucleotide triphosphates. This is CTP synthase from Phytoplasma australiense.